The chain runs to 103 residues: Large ribosomal subunit protein bL21 (103 aa).

Belongs to the bacterial ribosomal protein bL21 family. Part of the 50S ribosomal subunit. Contacts protein L20.

In terms of biological role, this protein binds to 23S rRNA in the presence of protein L20. This Ruminiclostridium cellulolyticum (strain ATCC 35319 / DSM 5812 / JCM 6584 / H10) (Clostridium cellulolyticum) protein is Large ribosomal subunit protein bL21.